The chain runs to 497 residues: Arginine/ornithine antiporter ArcD2 (497 aa).

Transmembrane regions (helical) follow at residues 8–28 (GISLFALLAIIISGAIGGGVF), 41–61 (GGVVISWLFIGFGILMLVLSF), 88–108 (FLSGWGYWISAWTGTIGFAVL), 127–147 (SLTILSVIIVSIISWILMLLV), 160–180 (IVMIAKLIPLVVFSITGIILF), 220–240 (IKGSLMVMVWVFVGIEGATMM), 255–275 (VIGLAVLLVIYVLLSLLPYGY), 297–317 (VGGWGGSLMAVGLMISLLGAW), 354–374 (LLITQLMIQIFIIITYFVANA), 378–398 (FIYMATAVIMICYALVGAYLF), 406–426 (SVKNILIGFFTFAFQALALYL), 429–449 (WQYVWLAMILYTIGFLLFIGA), and 462–482 (WLGMLVVTVLGVLAIVVLICG).

Belongs to the amino acid-polyamine-organocation (APC) superfamily. Basic amino acid/polyamine antiporter (APA) (TC 2.A.3.2) family.

It is found in the cell membrane. It carries out the reaction L-ornithine(in) + L-arginine(out) = L-ornithine(out) + L-arginine(in). Catalyzes electroneutral exchange between L-arginine and L-ornithine. Can also efficiently translocate L-alanine. May function in vivo as a L-arginine/L-alanine exchanger in a pathway together with the arcT gene, which is found adjacent to the arcD2 gene in the ADI gene cluster. The protein is Arginine/ornithine antiporter ArcD2 of Lactococcus lactis subsp. cremoris (strain MG1363).